We begin with the raw amino-acid sequence, 158 residues long: Small ribosomal subunit protein uS7 (158 aa).

Belongs to the universal ribosomal protein uS7 family. Part of the 30S ribosomal subunit. Contacts proteins S9 and S11.

Functionally, one of the primary rRNA binding proteins, it binds directly to 16S rRNA where it nucleates assembly of the head domain of the 30S subunit. Is located at the subunit interface close to the decoding center, probably blocks exit of the E-site tRNA. This chain is Small ribosomal subunit protein uS7, found in Bacteroides fragilis (strain YCH46).